The primary structure comprises 645 residues: Translation factor GUF1, mitochondrial (645 aa).

A tr-type G domain is found at Glu44–Thr228. Residues Ala53–Ser60, Asp120–His124, and Asn174–Asp177 contribute to the GTP site.

It belongs to the TRAFAC class translation factor GTPase superfamily. Classic translation factor GTPase family. LepA subfamily.

Its subcellular location is the mitochondrion inner membrane. It catalyses the reaction GTP + H2O = GDP + phosphate + H(+). In terms of biological role, promotes mitochondrial protein synthesis. May act as a fidelity factor of the translation reaction, by catalyzing a one-codon backward translocation of tRNAs on improperly translocated ribosomes. Binds to mitochondrial ribosomes in a GTP-dependent manner. This Saccharomyces cerevisiae (strain ATCC 204508 / S288c) (Baker's yeast) protein is Translation factor GUF1, mitochondrial.